A 187-amino-acid chain; its full sequence is Elongation factor P (187 aa).

Belongs to the elongation factor P family.

It is found in the cytoplasm. The protein operates within protein biosynthesis; polypeptide chain elongation. In terms of biological role, involved in peptide bond synthesis. Stimulates efficient translation and peptide-bond synthesis on native or reconstituted 70S ribosomes in vitro. Probably functions indirectly by altering the affinity of the ribosome for aminoacyl-tRNA, thus increasing their reactivity as acceptors for peptidyl transferase. In Mycolicibacterium gilvum (strain PYR-GCK) (Mycobacterium gilvum (strain PYR-GCK)), this protein is Elongation factor P.